Here is a 370-residue protein sequence, read N- to C-terminus: Forkhead box protein I1-A (370 aa).

Disordered regions lie at residues 1–28 (MNPV…AQEA), 212–269 (DNGN…CPSP), and 342–370 (SSLP…QGRY). Positions 127-221 (RPPYSYSALI…DNGNFRRKRK (95 aa)) form a DNA-binding region, fork-head. Positions 232–245 (AKREEDHVSPKGKE) are enriched in basic and acidic residues. Residues 349–370 (QKQPPYLQQLHPQQSPLYQGRY) show a composition bias toward low complexity.

As to expression, initially localized to the animal hemisphere (the presumptive ectoderm) of early-mid blastula embryos. Becomes restricted to head placodes, excluding the otic placodes, by the tailbud stages.

It is found in the nucleus. In terms of biological role, transcription factor. Essential for ventral specification of the early cephalic (head) ectoderm during gastrulation, playing a role in the non-neural versus neural cell fate choice. Binds to DNA via the target sequence 5'-[AG]TAAA[CT]A-3', with 5'-ATAAACA-3' being the preferred binding site. In Xenopus laevis (African clawed frog), this protein is Forkhead box protein I1-A (foxi1-a).